The primary structure comprises 290 residues: Cbb3-type cytochrome c oxidase subunit FixP (290 aa).

Over methionine 1–arginine 32 the chain is Cytoplasmic. Residues tryptophan 33–proline 53 traverse the membrane as a helical segment. Residues alanine 54–lysine 290 lie on the Periplasmic side of the membrane. Cytochrome c domains follow at residues leucine 109–serine 198 and tyrosine 206–glycine 287. The heme c site is built by cysteine 122, cysteine 125, histidine 126, methionine 173, cysteine 219, cysteine 222, histidine 223, and methionine 264.

This sequence belongs to the CcoP / FixP family. As to quaternary structure, component of the cbb3-type cytochrome c oxidase at least composed of FixN, FixO, FixQ and FixP. It depends on heme c as a cofactor.

The protein localises to the cell inner membrane. The protein operates within energy metabolism; oxidative phosphorylation. Its function is as follows. C-type cytochrome. Part of the cbb3-type cytochrome c oxidase complex. FixP subunit is required for transferring electrons from donor cytochrome c via its heme groups to FixO subunit. From there, electrons are shuttled to the catalytic binuclear center of FixN subunit where oxygen reduction takes place. The complex also functions as a proton pump. The polypeptide is Cbb3-type cytochrome c oxidase subunit FixP (Bradyrhizobium diazoefficiens (strain JCM 10833 / BCRC 13528 / IAM 13628 / NBRC 14792 / USDA 110)).